A 113-amino-acid polypeptide reads, in one-letter code: Pro-FMRFamide-related neuropeptide FF (113 aa).

The N-terminal stretch at 1–20 (MDSRQAAALLVLLLLIDGGC) is a signal peptide. Positions 21 to 65 (AEGPGGQQEDQLSAEEDSEPLPPQDAQTSGSLLHYLLQAMERPGR) are excised as a propeptide. Residues 22-48 (EGPGGQQEDQLSAEEDSEPLPPQDAQT) form a disordered region. Phe-76 bears the Phenylalanine amide mark. The propeptide occupies 79 to 92 (NTQGSWRNEWLSPR). Phe-110 bears the Phenylalanine amide mark.

This sequence belongs to the FARP (FMRFamide related peptide) family.

The protein resides in the secreted. Its function is as follows. Morphine modulating peptides. Have wide-ranging physiologic effects, including the modulation of morphine-induced analgesia, elevation of arterial blood pressure, and increased somatostatin secretion from the pancreas. Neuropeptide FF potentiates and sensitizes ASIC1 and ASIC3 channels. This Homo sapiens (Human) protein is Pro-FMRFamide-related neuropeptide FF.